Reading from the N-terminus, the 303-residue chain is Dihydroorotate dehydrogenase B (NAD(+)), catalytic subunit (303 aa).

FMN-binding positions include Ser-21 and 45-46; that span reads KG. Substrate contacts are provided by residues Lys-45 and 69–73; that span reads NAVGL. The FMN site is built by Asn-99 and Asn-127. Residue Asn-127 coordinates substrate. Cys-130 serves as the catalytic Nucleophile. FMN is bound by residues Lys-165 and Ile-191. Substrate is bound at residue 192–193; the sequence is NT. Residues Gly-217, 243–244, and 265–266 each bind FMN; these read GG and GT.

The protein belongs to the dihydroorotate dehydrogenase family. Type 1 subfamily. As to quaternary structure, heterotetramer of 2 PyrK and 2 PyrD type B subunits. FMN serves as cofactor.

It localises to the cytoplasm. The enzyme catalyses (S)-dihydroorotate + NAD(+) = orotate + NADH + H(+). It participates in pyrimidine metabolism; UMP biosynthesis via de novo pathway; orotate from (S)-dihydroorotate (NAD(+) route): step 1/1. Its function is as follows. Catalyzes the conversion of dihydroorotate to orotate with NAD(+) as electron acceptor. The chain is Dihydroorotate dehydrogenase B (NAD(+)), catalytic subunit (pyrD) from Phocaeicola vulgatus (strain ATCC 8482 / DSM 1447 / JCM 5826 / CCUG 4940 / NBRC 14291 / NCTC 11154) (Bacteroides vulgatus).